The sequence spans 443 residues: ATP-dependent protease ATPase subunit HslU (443 aa).

ATP is bound by residues Val18 and 60–65 (GVGKTE). A disordered region spans residues 136-158 (LPPPRDFNEDSQRTNADSSTRQL). A compositionally biased stretch (polar residues) spans 148-157 (RTNADSSTRQ). Asp256, Glu321, and Arg393 together coordinate ATP.

This sequence belongs to the ClpX chaperone family. HslU subfamily. As to quaternary structure, a double ring-shaped homohexamer of HslV is capped on each side by a ring-shaped HslU homohexamer. The assembly of the HslU/HslV complex is dependent on binding of ATP.

The protein localises to the cytoplasm. In terms of biological role, ATPase subunit of a proteasome-like degradation complex; this subunit has chaperone activity. The binding of ATP and its subsequent hydrolysis by HslU are essential for unfolding of protein substrates subsequently hydrolyzed by HslV. HslU recognizes the N-terminal part of its protein substrates and unfolds these before they are guided to HslV for hydrolysis. In Marinobacter nauticus (strain ATCC 700491 / DSM 11845 / VT8) (Marinobacter aquaeolei), this protein is ATP-dependent protease ATPase subunit HslU.